Consider the following 140-residue polypeptide: ATP synthase epsilon chain 1 (140 aa).

Belongs to the ATPase epsilon chain family. F-type ATPases have 2 components, CF(1) - the catalytic core - and CF(0) - the membrane proton channel. CF(1) has five subunits: alpha(3), beta(3), gamma(1), delta(1), epsilon(1). CF(0) has three main subunits: a, b and c.

It localises to the cell inner membrane. In terms of biological role, produces ATP from ADP in the presence of a proton gradient across the membrane. The protein is ATP synthase epsilon chain 1 of Photobacterium profundum (strain SS9).